Here is a 498-residue protein sequence, read N- to C-terminus: Cytotardin (498 aa).

A coil 1A region spans residues 18–58 (DRVHSKDELQALNTRLAKYIDKIRNLENENVALQRQLQTAE). Residues 22 to 378 (SKDELQALNT…KLLSGEEQRL (357 aa)) form the IF rod domain. The segment at 59 to 69 (QTTVTEIHRVS) is linker 1. A coil 1B region spans residues 70-213 (KNYDEELAKL…ENLREEKSQR (144 aa)). Residues 214–231 (QYLLHDLQRGLQDEFESK) form a linker 2 region. The tract at residues 232 to 371 (LVQQLNELRA…AELATYNKLL (140 aa)) is coil 2. A disordered region spans residues 381–425 (DGSGTVIRRPTGGATGTGSGIYGGTGSGGYSRDIGSTTTTKTTYT). Residues 393-409 (GATGTGSGIYGGTGSGG) show a composition bias toward gly residues.

This sequence belongs to the intermediate filament family.

The protein resides in the cytoplasm. The protein localises to the cell cortex. Functionally, intermediate filament (IF) protein that forms both short filaments and extensive cytoskeletal networks which most likely are homomeric. Some of the cytotardin arrays display cage-like perinuclear structures, while others are located in the periphery close to the cell membrane. The entire tardigrade body is ensheathed by a grid of belt-like filaments formed by the cytotardin protein, which retain their integrity even in contracted specimens. The belt-like structures encircling each epidermal cell might help to resist the shearing forces that arise during freezing and thawing cycles, whereas the dense meshwork at the basis of each claw and around the stylets might provide the tissue stability necessary for locomotion and feeding. The polypeptide is Cytotardin (Hypsibius exemplaris (Freshwater tardigrade)).